The chain runs to 322 residues: Lipoyl synthase (322 aa).

[4Fe-4S] cluster contacts are provided by Cys-66, Cys-71, Cys-77, Cys-92, Cys-96, Cys-99, and Ser-306. One can recognise a Radical SAM core domain in the interval 78–295; sequence FSKGTATFMI…EKEAYELGFS (218 aa).

Belongs to the radical SAM superfamily. Lipoyl synthase family. Requires [4Fe-4S] cluster as cofactor.

The protein localises to the cytoplasm. It carries out the reaction [[Fe-S] cluster scaffold protein carrying a second [4Fe-4S](2+) cluster] + N(6)-octanoyl-L-lysyl-[protein] + 2 oxidized [2Fe-2S]-[ferredoxin] + 2 S-adenosyl-L-methionine + 4 H(+) = [[Fe-S] cluster scaffold protein] + N(6)-[(R)-dihydrolipoyl]-L-lysyl-[protein] + 4 Fe(3+) + 2 hydrogen sulfide + 2 5'-deoxyadenosine + 2 L-methionine + 2 reduced [2Fe-2S]-[ferredoxin]. The protein operates within protein modification; protein lipoylation via endogenous pathway; protein N(6)-(lipoyl)lysine from octanoyl-[acyl-carrier-protein]: step 2/2. Catalyzes the radical-mediated insertion of two sulfur atoms into the C-6 and C-8 positions of the octanoyl moiety bound to the lipoyl domains of lipoate-dependent enzymes, thereby converting the octanoylated domains into lipoylated derivatives. This is Lipoyl synthase from Neisseria meningitidis serogroup C (strain 053442).